The sequence spans 307 residues: UDP-3-O-acyl-N-acetylglucosamine deacetylase (307 aa).

3 residues coordinate Zn(2+): His-78, His-237, and Asp-241. The active-site Proton donor is the His-264.

Belongs to the LpxC family. Requires Zn(2+) as cofactor.

It carries out the reaction a UDP-3-O-[(3R)-3-hydroxyacyl]-N-acetyl-alpha-D-glucosamine + H2O = a UDP-3-O-[(3R)-3-hydroxyacyl]-alpha-D-glucosamine + acetate. The protein operates within glycolipid biosynthesis; lipid IV(A) biosynthesis; lipid IV(A) from (3R)-3-hydroxytetradecanoyl-[acyl-carrier-protein] and UDP-N-acetyl-alpha-D-glucosamine: step 2/6. Functionally, catalyzes the hydrolysis of UDP-3-O-myristoyl-N-acetylglucosamine to form UDP-3-O-myristoylglucosamine and acetate, the committed step in lipid A biosynthesis. The sequence is that of UDP-3-O-acyl-N-acetylglucosamine deacetylase from Azoarcus sp. (strain BH72).